The primary structure comprises 259 residues: Protein LEAD-SENSITIVE 1 (259 aa).

The LRAT domain maps to 20–168 (YSWRTAYIYA…CKTALLVLEG (149 aa)). Active-site residues include histidine 30 and histidine 42. The active-site Acyl-thioester intermediate is cysteine 152.

In terms of tissue distribution, highly expressed in inflorescences, siliques and stems, and, to a lower extent, in roots and leaves.

The protein resides in the cytoplasm. In terms of biological role, confers tolerance to lead ions (Pb) stress mediated by Pb(NO(3))(2) probably by promoting Pb accumulation leading to subsequent glutathione-dependent phytochelatin (PC) synthesis and related gene expression, including PDR12/ABCG40, GSH1, GSH2, GR1, GR2, PCS1 and PCS2. The chain is Protein LEAD-SENSITIVE 1 from Arabidopsis thaliana (Mouse-ear cress).